Reading from the N-terminus, the 227-residue chain is Cytochrome c oxidase subunit 2 (227 aa).

Topologically, residues 1–14 (MAYPFQLGLQDATS) are mitochondrial intermembrane. The helical transmembrane segment at 15–45 (PIMEELLHFHDHTLMIVFLISSLVLYIISLM) threads the bilayer. Residues 46 to 59 (LTTKLTHTSTMDAQ) are Mitochondrial matrix-facing. Residues 60 to 87 (EVETVWTILPAIILISIALPSLRILYMM) form a helical membrane-spanning segment. Topologically, residues 88 to 227 (DEINNPSLTV…YFEAWSTLMM (140 aa)) are mitochondrial intermembrane. Cu cation is bound by residues H161, C196, E198, C200, H204, and M207. E198 contacts Mg(2+). Y218 carries the post-translational modification Phosphotyrosine.

This sequence belongs to the cytochrome c oxidase subunit 2 family. As to quaternary structure, component of the cytochrome c oxidase (complex IV, CIV), a multisubunit enzyme composed of 14 subunits. The complex is composed of a catalytic core of 3 subunits MT-CO1, MT-CO2 and MT-CO3, encoded in the mitochondrial DNA, and 11 supernumerary subunits COX4I, COX5A, COX5B, COX6A, COX6B, COX6C, COX7A, COX7B, COX7C, COX8 and NDUFA4, which are encoded in the nuclear genome. The complex exists as a monomer or a dimer and forms supercomplexes (SCs) in the inner mitochondrial membrane with NADH-ubiquinone oxidoreductase (complex I, CI) and ubiquinol-cytochrome c oxidoreductase (cytochrome b-c1 complex, complex III, CIII), resulting in different assemblies (supercomplex SCI(1)III(2)IV(1) and megacomplex MCI(2)III(2)IV(2)). Found in a complex with TMEM177, COA6, COX18, COX20, SCO1 and SCO2. Interacts with TMEM177 in a COX20-dependent manner. Interacts with COX20. Interacts with COX16. Cu cation serves as cofactor.

It localises to the mitochondrion inner membrane. It carries out the reaction 4 Fe(II)-[cytochrome c] + O2 + 8 H(+)(in) = 4 Fe(III)-[cytochrome c] + 2 H2O + 4 H(+)(out). Component of the cytochrome c oxidase, the last enzyme in the mitochondrial electron transport chain which drives oxidative phosphorylation. The respiratory chain contains 3 multisubunit complexes succinate dehydrogenase (complex II, CII), ubiquinol-cytochrome c oxidoreductase (cytochrome b-c1 complex, complex III, CIII) and cytochrome c oxidase (complex IV, CIV), that cooperate to transfer electrons derived from NADH and succinate to molecular oxygen, creating an electrochemical gradient over the inner membrane that drives transmembrane transport and the ATP synthase. Cytochrome c oxidase is the component of the respiratory chain that catalyzes the reduction of oxygen to water. Electrons originating from reduced cytochrome c in the intermembrane space (IMS) are transferred via the dinuclear copper A center (CU(A)) of subunit 2 and heme A of subunit 1 to the active site in subunit 1, a binuclear center (BNC) formed by heme A3 and copper B (CU(B)). The BNC reduces molecular oxygen to 2 water molecules using 4 electrons from cytochrome c in the IMS and 4 protons from the mitochondrial matrix. The protein is Cytochrome c oxidase subunit 2 (MT-CO2) of Lycaon pictus (African wild dog).